We begin with the raw amino-acid sequence, 98 residues long: NADH-ubiquinone oxidoreductase chain 4L (98 aa).

The next 3 helical transmembrane spans lie at 1–21, 29–49, and 61–81; these read MSMV…GLLV, SLLC…MAIL, and IILL…LVMV.

Belongs to the complex I subunit 4L family. As to quaternary structure, core subunit of respiratory chain NADH dehydrogenase (Complex I) which is composed of 45 different subunits.

It localises to the mitochondrion inner membrane. The catalysed reaction is a ubiquinone + NADH + 5 H(+)(in) = a ubiquinol + NAD(+) + 4 H(+)(out). Functionally, core subunit of the mitochondrial membrane respiratory chain NADH dehydrogenase (Complex I) which catalyzes electron transfer from NADH through the respiratory chain, using ubiquinone as an electron acceptor. Part of the enzyme membrane arm which is embedded in the lipid bilayer and involved in proton translocation. This chain is NADH-ubiquinone oxidoreductase chain 4L (MT-ND4L), found in Lynx canadensis (Canada lynx).